A 330-amino-acid chain; its full sequence is MINFSSFYKDIADSNLQHWLETLPAILGKWQRDHKHGNLPKWEKVLNKLHYPQPDNIDFSSSVTIGTGEQLSPGQVEKLTNLLEVFQPWRKGPFSVHGIQIDTEWRSDWKWDRVKNFISPLKNRTVLDVGCGSGYHMWRMLGDGATRVVGIDPSPLFLCQFEAIKRVAGNQHPVYLLPLGIEELPPLDAFDTVFSMGVLYHRRSPIDHLLQLRDQLRVGGELVLETLVIDGDENAVLVPQDRYGKMNNVWFIPSVAALMLWLKKCEFIDIRCVDIDITSLAEQRSTHWMKNESLVDYLDPNDVSLTVEGYPAPKRAIIIATKNQPNHDLV.

Residues lysine 91, tryptophan 105, lysine 110, glycine 130, 152 to 154 (DPS), 181 to 182 (IE), methionine 196, tyrosine 200, and arginine 315 each bind carboxy-S-adenosyl-L-methionine.

This sequence belongs to the class I-like SAM-binding methyltransferase superfamily. CmoB family. In terms of assembly, homotetramer.

It catalyses the reaction carboxy-S-adenosyl-L-methionine + 5-hydroxyuridine(34) in tRNA = 5-carboxymethoxyuridine(34) in tRNA + S-adenosyl-L-homocysteine + H(+). Catalyzes carboxymethyl transfer from carboxy-S-adenosyl-L-methionine (Cx-SAM) to 5-hydroxyuridine (ho5U) to form 5-carboxymethoxyuridine (cmo5U) at position 34 in tRNAs. In Shewanella frigidimarina (strain NCIMB 400), this protein is tRNA U34 carboxymethyltransferase.